The sequence spans 405 residues: Argininosuccinate synthase (405 aa).

12–20 (AYSGGLDTS) provides a ligand contact to ATP. L-citrulline is bound by residues Y92 and S97. G122 is an ATP binding site. The L-aspartate site is built by T124, N128, and D129. Residue N128 coordinates L-citrulline. R132, S181, S190, E266, and Y278 together coordinate L-citrulline.

Belongs to the argininosuccinate synthase family. Type 1 subfamily. As to quaternary structure, homotetramer.

Its subcellular location is the cytoplasm. It catalyses the reaction L-citrulline + L-aspartate + ATP = 2-(N(omega)-L-arginino)succinate + AMP + diphosphate + H(+). The protein operates within amino-acid biosynthesis; L-arginine biosynthesis; L-arginine from L-ornithine and carbamoyl phosphate: step 2/3. The sequence is that of Argininosuccinate synthase from Cronobacter sakazakii (strain ATCC BAA-894) (Enterobacter sakazakii).